The following is a 638-amino-acid chain: 3D-(3,5/4)-trihydroxycyclohexane-1,2-dione hydrolase (638 aa).

Residue Glu-67 participates in thiamine diphosphate binding. Residues Ser-442–Gly-523 are thiamine pyrophosphate binding. 2 residues coordinate Mg(2+): Asp-494 and Asn-521.

It belongs to the TPP enzyme family. Mg(2+) serves as cofactor. The cofactor is thiamine diphosphate.

The enzyme catalyses 3D-3,5/4-trihydroxycyclohexane-1,2-dione + H2O = 5-deoxy-D-glucuronate + H(+). Its pathway is polyol metabolism; myo-inositol degradation into acetyl-CoA; acetyl-CoA from myo-inositol: step 3/7. In terms of biological role, involved in the cleavage of the C1-C2 bond of 3D-(3,5/4)-trihydroxycyclohexane-1,2-dione (THcHDO) to yield 5-deoxy-glucuronate (5DG). In Listeria monocytogenes serotype 4b (strain F2365), this protein is 3D-(3,5/4)-trihydroxycyclohexane-1,2-dione hydrolase.